We begin with the raw amino-acid sequence, 85 residues long: Polcalcin Aln g 4 (85 aa).

2 consecutive EF-hand domains span residues 7-42 (QDQA…LGSV) and 45-77 (DEVK…NRGL). Asp-20, Asn-22, Asp-24, Lys-26, Glu-31, Asp-55, Asp-57, Asp-59, and Glu-66 together coordinate Ca(2+).

The chain is Polcalcin Aln g 4 from Alnus glutinosa (European alder).